A 276-amino-acid polypeptide reads, in one-letter code: Omega-amidase NIT2-B (276 aa).

Residues 4–248 (FRLSLVQFLV…ETVISADIDL (245 aa)) enclose the CN hydrolase domain. Residue Glu43 is the Proton acceptor of the active site. Lys112 acts as the Proton donor in catalysis. The Nucleophile role is filled by Cys153.

It belongs to the carbon-nitrogen hydrolase superfamily. NIT1/NIT2 family. As to quaternary structure, homodimer.

The protein resides in the cytoplasm. It carries out the reaction 2-oxoglutaramate + H2O = 2-oxoglutarate + NH4(+). It catalyses the reaction 2-oxosuccinamate + H2O = oxaloacetate + NH4(+). Has omega-amidase activity. The role of omega-amidase is to remove potentially toxic intermediates by converting 2-oxoglutaramate and 2-oxosuccinamate to biologically useful 2-oxoglutarate and oxaloacetate, respectively. This is Omega-amidase NIT2-B (nit2b) from Xenopus laevis (African clawed frog).